A 167-amino-acid polypeptide reads, in one-letter code: Small ribosomal subunit protein uS5 (167 aa).

The 64-residue stretch at Leu12–Ile75 folds into the S5 DRBM domain.

It belongs to the universal ribosomal protein uS5 family. As to quaternary structure, part of the 30S ribosomal subunit. Contacts proteins S4 and S8.

With S4 and S12 plays an important role in translational accuracy. Functionally, located at the back of the 30S subunit body where it stabilizes the conformation of the head with respect to the body. This Vibrio vulnificus (strain CMCP6) protein is Small ribosomal subunit protein uS5.